The following is a 694-amino-acid chain: Putative L-type lectin-domain containing receptor kinase II.2 (694 aa).

Residues 1-24 form the signal peptide; that stretch reads MAGVLRSLRFWMIICVQVLSLVLA. The Extracellular segment spans residues 25-318; that stretch reads QDRDEFVYHD…PTSRSKDSKN (294 aa). The segment at 27 to 272 is legume-lectin like; sequence RDEFVYHDFS…DQYILGWSFK (246 aa). 10 N-linked (GlcNAc...) asparagine glycosylation sites follow: asparagine 57, asparagine 58, asparagine 73, asparagine 131, asparagine 172, asparagine 183, asparagine 201, asparagine 208, asparagine 240, and asparagine 246. Residues 283 to 314 form a disordered region; sequence SKILDPPNRPPPPSSPPPPPPPPPTPPTSRSK. The segment covering 289-309 has biased composition (pro residues); that stretch reads PNRPPPPSSPPPPPPPPPTPP. A helical transmembrane segment spans residues 319–339; the sequence is IIIICVTVTSIAFLLMLGGFL. The Cytoplasmic portion of the chain corresponds to 340-694; that stretch reads YLYKKKKYAE…EDVTILFGGR (355 aa). Positions 375-650 constitute a Protein kinase domain; sequence FRENRLLGAG…IQYLEGNATI (276 aa). Residues 381-389 and lysine 403 each bind ATP; that span reads LGAGGFGKV. Catalysis depends on aspartate 500, which acts as the Proton acceptor.

This sequence in the C-terminal section; belongs to the protein kinase superfamily. Ser/Thr protein kinase family. It in the N-terminal section; belongs to the leguminous lectin family.

It localises to the cell membrane. The enzyme catalyses L-seryl-[protein] + ATP = O-phospho-L-seryl-[protein] + ADP + H(+). It carries out the reaction L-threonyl-[protein] + ATP = O-phospho-L-threonyl-[protein] + ADP + H(+). The polypeptide is Putative L-type lectin-domain containing receptor kinase II.2 (LECRK22) (Arabidopsis thaliana (Mouse-ear cress)).